Consider the following 119-residue polypeptide: Large ribosomal subunit protein uL22 (119 aa).

This sequence belongs to the universal ribosomal protein uL22 family. Part of the 50S ribosomal subunit.

In terms of biological role, this protein binds specifically to 23S rRNA; its binding is stimulated by other ribosomal proteins, e.g. L4, L17, and L20. It is important during the early stages of 50S assembly. It makes multiple contacts with different domains of the 23S rRNA in the assembled 50S subunit and ribosome. The globular domain of the protein is located near the polypeptide exit tunnel on the outside of the subunit, while an extended beta-hairpin is found that lines the wall of the exit tunnel in the center of the 70S ribosome. The sequence is that of Large ribosomal subunit protein uL22 from Bifidobacterium animalis subsp. lactis (strain AD011).